A 21-amino-acid polypeptide reads, in one-letter code: IIGGDECNINEHPFLVALYDA.

The Peptidase S1 domain maps to 1-21 (IIGGDECNINEHPFLVALYDA).

It belongs to the peptidase S1 family. Snake venom subfamily. Monomer. In terms of processing, glycosylated; contains 35.8% neutral carbohydrate. As to expression, expressed by the venom gland.

The protein localises to the secreted. Inhibited by PMSF and soybean trypsin inhibitor. Partially inhibited by L-cysteine and DTT. Not affected by EDTA. Its function is as follows. Multifunctional venom serine protease that has fibrino(geno)lytic activity towards the A alpha-chain of human fibrinogen (FGA) and a slow activity towards the B beta-chain (FGB). Also hydrolyzes bovine low-molecular-mass kininogen and releases bradykinin. Catalyzes the hydrolysis of BAEE, S-2238 and S-2302. The protein is Snake venom serine protease jerdonase of Protobothrops jerdonii (Jerdon's pitviper).